The primary structure comprises 286 residues: 4-hydroxybenzoate octaprenyltransferase (286 aa).

The next 8 helical transmembrane spans lie at 20-40 (IGTF…AGGM), 43-63 (LKVL…GCII), 95-115 (ILFV…NPLV), 116-136 (VQLS…KRFT), 142-162 (FLGV…LGTV), 167-187 (WWLF…YAMV), 210-230 (QIIG…GLSA), and 235-255 (VFAL…KLIF).

The protein belongs to the UbiA prenyltransferase family. It depends on Mg(2+) as a cofactor.

The protein localises to the cell inner membrane. It carries out the reaction all-trans-octaprenyl diphosphate + 4-hydroxybenzoate = 4-hydroxy-3-(all-trans-octaprenyl)benzoate + diphosphate. It functions in the pathway cofactor biosynthesis; ubiquinone biosynthesis. In terms of biological role, catalyzes the prenylation of para-hydroxybenzoate (PHB) with an all-trans polyprenyl group. Mediates the second step in the final reaction sequence of ubiquinone-8 (UQ-8) biosynthesis, which is the condensation of the polyisoprenoid side chain with PHB, generating the first membrane-bound Q intermediate 3-octaprenyl-4-hydroxybenzoate. This chain is 4-hydroxybenzoate octaprenyltransferase, found in Shewanella loihica (strain ATCC BAA-1088 / PV-4).